We begin with the raw amino-acid sequence, 657 residues long: Transmembrane protein 232 (657 aa).

2 helical membrane-spanning segments follow: residues 168–188 and 353–373; these read IGYL…LESF and WAWN…LYAA.

The protein localises to the membrane. Plays a critical role for male fertility and sperm motility by regulating sperm cytoplasm removal and maintaining axoneme integrity. This Homo sapiens (Human) protein is Transmembrane protein 232 (TMEM232).